The following is a 258-amino-acid chain: MRVVPTLAAASLALGAVAGEHVERQLILGGGEVPIGTKTYATGIRSTADGNAFCAGALVSPTHVLTTAACTGFEPPKFVAVGTHYINGTKDGEQIKVVSAQNHTLNNASSASYDFALLTLEKPSKFSPIKLPNPDDSDIVAGMWTKVMGWGDTSYPNGTRSNELQSVGVEVWNNEDCARLFVVDNSSVCAGGAPGRDACVGDTGASLVKEKGQGDADDILIGLSSWGSGCGDPGIPSVYSRVSTAIEWITSVTKVQQV.

Positions 1-19 (MRVVPTLAAASLALGAVAG) are cleaved as a signal peptide. Residues 27 to 254 (ILGGGEVPIG…AIEWITSVTK (228 aa)) enclose the Peptidase S1 domain. Cysteines 54 and 70 form a disulfide. N-linked (GlcNAc...) asparagine glycosylation is found at Asn87, Asn102, Asn107, Asn157, and Asn185. 2 cysteine pairs are disulfide-bonded: Cys177/Cys189 and Cys199/Cys230.

Belongs to the peptidase S1 family. As to quaternary structure, forms an apoplastic complex with host endoglucanases in tomato leaves during P.infestans infection.

The protein resides in the secreted. Secreted effector that suppresses host plant glucan elicitor-mediated defense responses. Targets host endoglucanases and inhibits the endoglucanase-mediated release of elicitor-active glucan oligosaccharides from P.infestans cell walls. This chain is Glucanase inhibitor protein 1, found in Phytophthora infestans (Potato late blight agent).